A 249-amino-acid chain; its full sequence is 5'-nucleotidase SurE (249 aa).

A divalent metal cation-binding residues include Asp9, Asp10, Ser40, and Asn92.

This sequence belongs to the SurE nucleotidase family. A divalent metal cation serves as cofactor.

The protein resides in the cytoplasm. It carries out the reaction a ribonucleoside 5'-phosphate + H2O = a ribonucleoside + phosphate. In terms of biological role, nucleotidase that shows phosphatase activity on nucleoside 5'-monophosphates. This chain is 5'-nucleotidase SurE, found in Shewanella loihica (strain ATCC BAA-1088 / PV-4).